Reading from the N-terminus, the 374-residue chain is Protein Brevis radix-like 2 (374 aa).

Disordered regions lie at residues 12 to 43 (NTNN…IKSL) and 57 to 80 (AYKS…ADSD). Polar residues predominate over residues 65 to 80 (SGSSNQNKNRSYADSD). Residues 143-198 (KEWVAQVEPGVLITFVSLPEGGNDMKRIRFSREMFDKWQAQKWWAENFDKVMELYN) form the BRX 1 domain. Residues 205 to 316 (QSVPLPTPPR…EELSVSNASD (112 aa)) form a disordered region. Polar residues-rich tracts occupy residues 246–259 (SSGS…TQTQ) and 267–288 (GLAT…SSVD). Residues 289 to 307 (ESARSSFSREEEEADHSGE) show a composition bias toward basic and acidic residues. Residues 319-374 (TEWVEQDEAGVYITIRALPDGTRELRRVRFSREKFGETNARLWWEQNRARIQQQYL) enclose the BRX 2 domain.

Belongs to the BRX family. In terms of tissue distribution, expressed in roots.

The protein resides in the nucleus. The sequence is that of Protein Brevis radix-like 2 (BRXL2) from Arabidopsis thaliana (Mouse-ear cress).